The chain runs to 330 residues: LIM domain-containing protein pin-2 (330 aa).

5 LIM zinc-binding domains span residues 21–73 (CERC…CEHD), 82–132 (CAKC…CFLC), 144–194 (CNKC…CPRC), 202–255 (CFDC…CRDD), and 264–315 (CFIC…CKKC).

Expressed in neurons and intestine.

Its subcellular location is the cytoplasm. It localises to the nucleus. The sequence is that of LIM domain-containing protein pin-2 (pin-2) from Caenorhabditis elegans.